The primary structure comprises 518 residues: Arginyl-tRNA--protein transferase 1 (518 aa).

Position 169 is a phosphoserine (S169). The interval 175–203 is disordered; it reads EKLGSGEPSHSVKVHTVPKPGKGADLSKP.

It belongs to the R-transferase family. Monomer. Interacts with LIAT1; LIAT1 is not a substrate of ATE1, the interaction takes place in the cytoplasm and seems to increase ATE1 arginyltransferase activity.

The protein resides in the nucleus. The protein localises to the cytoplasm. It catalyses the reaction an N-terminal L-alpha-aminoacyl-[protein] + L-arginyl-tRNA(Arg) = an N-terminal L-arginyl-L-aminoacyl-[protein] + tRNA(Arg) + H(+). Involved in the post-translational conjugation of arginine to the N-terminal aspartate or glutamate of a protein. This arginylation is required for degradation of the protein via the ubiquitin pathway. Does not arginylate cysteine residues. The polypeptide is Arginyl-tRNA--protein transferase 1 (Homo sapiens (Human)).